The following is a 282-amino-acid chain: Protein-export membrane protein SecF (282 aa).

A run of 6 helical transmembrane segments spans residues Ile9–Pro29, Glu120–Phe140, Ile149–Ile169, Ala174–Thr194, Lys214–Val234, and Leu236–Ile256.

Belongs to the SecD/SecF family. SecF subfamily. In terms of assembly, part of the protein translocation apparatus. Forms a complex with SecD.

The protein localises to the cell membrane. Involved in protein export. The polypeptide is Protein-export membrane protein SecF (Methanocaldococcus jannaschii (strain ATCC 43067 / DSM 2661 / JAL-1 / JCM 10045 / NBRC 100440) (Methanococcus jannaschii)).